A 166-amino-acid chain; its full sequence is Vasopressin-neurophysin 2-copeptin (166 aa).

The first 19 residues, 1 to 19, serve as a signal peptide directing secretion; sequence MPDATLPACFLGLLALTSA. A disulfide bridge connects residues cysteine 20 and cysteine 25. Glycine 28 carries the post-translational modification Glycine amide. 7 cysteine pairs are disulfide-bonded: cysteine 41–cysteine 85, cysteine 44–cysteine 58, cysteine 52–cysteine 75, cysteine 59–cysteine 65, cysteine 92–cysteine 104, cysteine 98–cysteine 116, and cysteine 105–cysteine 110. The N-linked (GlcNAc...) asparagine glycan is linked to asparagine 133.

This sequence belongs to the vasopressin/oxytocin family. As to quaternary structure, interacts with vasopressin receptors V1bR/AVPR1B (Ki=85 pM), V1aR/AVPR1A (Ki=0.6 nM) and V2R/AVPR2 (Ki=4.9 nM). Interacts with oxytocin receptor (OXTR) (Ki=110 nM). Post-translationally, a shorter neurophysin molecule (32-123) is called neurophysin-I and is derived from the complete protein (called neurophysin III) by proteolytic degradation (in vivo or after extraction).

It is found in the secreted. Its function is as follows. Neurophysin 2 specifically binds vasopressin. Functionally, vasopressin has a direct antidiuretic action on the kidney, it also causes vasoconstriction of the peripheral vessels. Acts by binding to vasopressin receptors (V1bR/AVPR1B, V1aR/AVPR1A, and V2R/AVPR2). This chain is Vasopressin-neurophysin 2-copeptin (AVP), found in Sus scrofa (Pig).